The primary structure comprises 104 residues: ATP synthase subunit c (104 aa).

Helical transmembrane passes span 37-57 (LLGAGVAIIGVAGAGIGQGAV) and 83-103 (AGIAESGAIYALVVAILLIFV).

It belongs to the ATPase C chain family. F-type ATPases have 2 components, F(1) - the catalytic core - and F(0) - the membrane proton channel. F(1) has five subunits: alpha(3), beta(3), gamma(1), delta(1), epsilon(1). F(0) has three main subunits: a(1), b(2) and c(10-14). The alpha and beta chains form an alternating ring which encloses part of the gamma chain. F(1) is attached to F(0) by a central stalk formed by the gamma and epsilon chains, while a peripheral stalk is formed by the delta and b chains.

Its subcellular location is the cell membrane. Functionally, f(1)F(0) ATP synthase produces ATP from ADP in the presence of a proton or sodium gradient. F-type ATPases consist of two structural domains, F(1) containing the extramembraneous catalytic core and F(0) containing the membrane proton channel, linked together by a central stalk and a peripheral stalk. During catalysis, ATP synthesis in the catalytic domain of F(1) is coupled via a rotary mechanism of the central stalk subunits to proton translocation. Key component of the F(0) channel; it plays a direct role in translocation across the membrane. A homomeric c-ring of between 10-14 subunits forms the central stalk rotor element with the F(1) delta and epsilon subunits. This is ATP synthase subunit c from Mesoplasma florum (strain ATCC 33453 / NBRC 100688 / NCTC 11704 / L1) (Acholeplasma florum).